The sequence spans 137 residues: Fluoride-specific ion channel FluC 1 (137 aa).

Helical transmembrane passes span 3–23 (PLVV…RLVL), 42–62 (INVT…GHGL), 69–89 (ILGT…YEAV), and 107–127 (MMFL…LAVA). Na(+) is bound by residues Gly76 and Thr79.

This sequence belongs to the fluoride channel Fluc/FEX (TC 1.A.43) family.

Its subcellular location is the cell membrane. It catalyses the reaction fluoride(in) = fluoride(out). Its activity is regulated as follows. Na(+) is not transported, but it plays an essential structural role and its presence is essential for fluoride channel function. Its function is as follows. Fluoride-specific ion channel. Important for reducing fluoride concentration in the cell, thus reducing its toxicity. The sequence is that of Fluoride-specific ion channel FluC 1 from Leifsonia xyli subsp. xyli (strain CTCB07).